The sequence spans 22 residues: Mu-conotoxin TIIIA (22 aa).

3 disulfides stabilise this stretch: Cys-4-Cys-16, Cys-5-Cys-21, and Cys-11-Cys-22. Residues Pro-8 and Pro-18 each carry the 4-hydroxyproline modification. Cys-22 is modified (cysteine amide).

The protein belongs to the conotoxin M superfamily. In terms of tissue distribution, expressed by the venom duct.

Its subcellular location is the secreted. Its function is as follows. Mu-conotoxins block voltage-gated sodium channels (Nav). This synthetic toxin reversibly and potently blocks rNav1.4/SCN4A (IC(50) is 9 nM) and rNav1.2/SCN2A (IC(50) is 40 nM). It also moderately blocks rNav1.1/SCN1A, rNav1.3/SCN3A, and rNav1.6/SCN8A. The block of SCN1A and SCN2A is modified when beta-subunits are coexpressed with alpha subunits. Hence, blocks of channels containing beta-1 and beta-3 subunits are more potent (compared to channels without beta subunits), whereas blocks of channels containing beta-2 and beta-4 subunits are less potent (compared to channels without beta subunits). The sequence is that of Mu-conotoxin TIIIA from Conus tulipa (Fish-hunting cone snail).